The sequence spans 449 residues: Tubulin alpha chain (449 aa).

8 residues coordinate GTP: glutamine 11, glutamate 71, serine 140, glycine 144, threonine 145, threonine 179, asparagine 206, and asparagine 228. Residue glutamate 71 coordinates Mg(2+). Residue glutamate 254 is part of the active site.

This sequence belongs to the tubulin family. As to quaternary structure, dimer of alpha and beta chains. A typical microtubule is a hollow water-filled tube with an outer diameter of 25 nm and an inner diameter of 15 nM. Alpha-beta heterodimers associate head-to-tail to form protofilaments running lengthwise along the microtubule wall with the beta-tubulin subunit facing the microtubule plus end conferring a structural polarity. Microtubules usually have 13 protofilaments but different protofilament numbers can be found in some organisms and specialized cells. Requires Mg(2+) as cofactor.

It localises to the cytoplasm. The protein localises to the cytoskeleton. The enzyme catalyses GTP + H2O = GDP + phosphate + H(+). Its function is as follows. Tubulin is the major constituent of microtubules, a cylinder consisting of laterally associated linear protofilaments composed of alpha- and beta-tubulin heterodimers. Microtubules grow by the addition of GTP-tubulin dimers to the microtubule end, where a stabilizing cap forms. Below the cap, tubulin dimers are in GDP-bound state, owing to GTPase activity of alpha-tubulin. The polypeptide is Tubulin alpha chain (TUB1) (Gibberella zeae (strain ATCC MYA-4620 / CBS 123657 / FGSC 9075 / NRRL 31084 / PH-1) (Wheat head blight fungus)).